The sequence spans 353 residues: 3-dehydroquinate synthase (353 aa).

NAD(+) is bound by residues 62–67, 96–100, 120–121, K133, and K142; these read DGEQYK, GVIGD, and TT. Zn(2+)-binding residues include E175, H236, and H253.

The protein belongs to the sugar phosphate cyclases superfamily. Dehydroquinate synthase family. Requires NAD(+) as cofactor. Co(2+) serves as cofactor. Zn(2+) is required as a cofactor.

It is found in the cytoplasm. It catalyses the reaction 7-phospho-2-dehydro-3-deoxy-D-arabino-heptonate = 3-dehydroquinate + phosphate. It participates in metabolic intermediate biosynthesis; chorismate biosynthesis; chorismate from D-erythrose 4-phosphate and phosphoenolpyruvate: step 2/7. Functionally, catalyzes the conversion of 3-deoxy-D-arabino-heptulosonate 7-phosphate (DAHP) to dehydroquinate (DHQ). The polypeptide is 3-dehydroquinate synthase (Helicobacter hepaticus (strain ATCC 51449 / 3B1)).